A 353-amino-acid chain; its full sequence is 2-oxoglutarate-dependent dioxygenase phqC (353 aa).

Positions 199–315 (CASELRLNNY…RRSCAFFLKA (117 aa)) constitute a Fe2OG dioxygenase domain. Residues His-227, Asp-229, and His-287 each contribute to the Fe cation site. Residue Arg-302 coordinates 2-oxoglutarate.

Belongs to the iron/ascorbate-dependent oxidoreductase family. Requires Fe(2+) as cofactor.

The protein operates within alkaloid biosynthesis. Its function is as follows. 2-oxoglutarate-dependent dioxygenase; part of the gene cluster that mediates the biosynthesis of paraherquamide, a fungal indole alkaloid that belongs to a family of natural products containing a characteristic bicyclo[2.2.2]diazaoctane core. The first steps in the biosynthesis of paraherquamide is the production of the beta-methyl-proline precursor from L-isoleucine. They require oxidation of a terminally hydroxylated L-isoleucine to the corresponding aldehyde by enzymes which have still to be identified. Spontaneous cyclization and dehydration would yield the 4-methyl pyrolline-5-carboxylic acid, which is then reduced by the pyrroline-5-carboxylate reductase phqD leading to the beta-methyl-proline precursor. The next step of paraherquamide biosynthesis involves coupling of beta-methyl-proline and L-tryptophan by the bimodular NRPS phqB, to produce a monooxopiperazine intermediate. The reductase (R) domain of phqB utilizes NADPH for hydride transfer to reduce the thioester bond of the T domain-tethered linear dipeptide to a hemithioaminal intermediate, which spontaneously cleaves the C-S bond to release the aldehyde product. This compound undergoes spontaneous cyclization and dehydration to give a dienamine which is reverse prenylated at C-2 by the reverse prenyltransferase phqJ. The other prenyltransferase present in the cluster, phqI may be a redundant gene in the pathway. During biosynthetic assembly, the key step to produce the polycyclic core is catalyzed by the bifunctional reductase and intramolecular [4+2] Diels-Alderase, phqE, resulting in formation of the [2.2.2] diazaoctane intermediate preparaherquamide. Following formation of preparaherquamide, an indole 2,3-epoxidation-initiated pinacol-like rearrangement is catalyzed by the phqK FAD-dependent monooxygenase. The prenyltransferase phqA, the cytochrome P450 monooxygenase phqL, and the FAD-linked oxidoreductase phqH (or the cytochrome P450 monooxygenase phqM), are proposed to be involved in the formation of the pyran ring. The FAD-dependent monooxygenase phqK is likely responsible for generation of the spiro-oxindole, and the N-methylation is likely mediated by the phqN methyltransferase leading to the isolable natural product paraherquamide F. However, the order of these biosynthetic steps has still to be determined. In late-stage paraherquamide biosynthesis, the third P450 monooxygenase, phqO, is probably responsible for the C-14 hydroxylation, transforming paraherquamide F to paraherquamide G, and paraherquamide E to the final product paraherquamide A. The expansion from the 6-membered ring pyran (in paraherquamides F and G) to the 7-membered dioxepin ring (in paraherquamides A and E) represents a poorly understood but intriguing process that probably involves the 2-oxoglutarate-dependent dioxygenase phqC. Finally, the remaining members of the paraherquamide cluster, including phqI as well as phqM (or phqH), do not have a clearly prescribed role and appear to be redundant. The chain is 2-oxoglutarate-dependent dioxygenase phqC from Penicillium fellutanum.